We begin with the raw amino-acid sequence, 279 residues long: Diaminopimelate epimerase (279 aa).

Substrate contacts are provided by Asn13 and Asn66. Cys75 functions as the Proton donor in the catalytic mechanism. Substrate contacts are provided by residues 76-77 (GN), Asn164, Asn197, and 215-216 (ER). The Proton acceptor role is filled by Cys224. 225 to 226 (GT) provides a ligand contact to substrate.

It belongs to the diaminopimelate epimerase family. As to quaternary structure, homodimer.

It is found in the cytoplasm. It carries out the reaction (2S,6S)-2,6-diaminopimelate = meso-2,6-diaminopimelate. The protein operates within amino-acid biosynthesis; L-lysine biosynthesis via DAP pathway; DL-2,6-diaminopimelate from LL-2,6-diaminopimelate: step 1/1. Functionally, catalyzes the stereoinversion of LL-2,6-diaminopimelate (L,L-DAP) to meso-diaminopimelate (meso-DAP), a precursor of L-lysine and an essential component of the bacterial peptidoglycan. This Nostoc punctiforme (strain ATCC 29133 / PCC 73102) protein is Diaminopimelate epimerase.